The sequence spans 236 residues: Small ribosomal subunit protein uS2c (236 aa).

This sequence belongs to the universal ribosomal protein uS2 family.

It localises to the plastid. The protein resides in the chloroplast. The protein is Small ribosomal subunit protein uS2c (rps2) of Coffea arabica (Arabian coffee).